Here is a 432-residue protein sequence, read N- to C-terminus: uncharacterized protein (432 aa).

3 disordered regions span residues 37–61 (DGIG…SADC), 127–151 (RDHD…DTRY), and 298–378 (SVSS…NHQC). Positions 312–335 (DSSTLANTQGFREDQSQQQHTPSP) are enriched in polar residues. Low complexity predominate over residues 341–366 (SSLSHQFHQSIHQSHQHHQSIYQSQH).

This is an uncharacterized protein from Arabidopsis thaliana (Mouse-ear cress).